The following is a 92-amino-acid chain: Putative transmembrane protein ORF92 (92 aa).

Transmembrane regions (helical) follow at residues phenylalanine 11–isoleucine 28, phenylalanine 32–serine 52, and phenylalanine 54–glycine 74.

The protein resides in the host membrane. The sequence is that of Putative transmembrane protein ORF92 from Acidianus convivator (ABV).